The sequence spans 90 residues: Small ribosomal subunit protein bS18 (90 aa).

Basic and acidic residues predominate over residues 1–14; the sequence is MARDNGNKDRDGKR. A disordered region spans residues 1 to 23; that stretch reads MARDNGNKDRDGKRPNGGRNRKM.

The protein belongs to the bacterial ribosomal protein bS18 family. Part of the 30S ribosomal subunit. Forms a tight heterodimer with protein bS6.

In terms of biological role, binds as a heterodimer with protein bS6 to the central domain of the 16S rRNA, where it helps stabilize the platform of the 30S subunit. The chain is Small ribosomal subunit protein bS18 from Clostridium acetobutylicum (strain ATCC 824 / DSM 792 / JCM 1419 / IAM 19013 / LMG 5710 / NBRC 13948 / NRRL B-527 / VKM B-1787 / 2291 / W).